Reading from the N-terminus, the 440-residue chain is Tubby-like F-box protein 13 (440 aa).

Positions 51–106 constitute an F-box domain; the sequence is SCWASLPPELLRDIIERLEESEATWPSRKHVVACAGVCRTWREMCKEIVKNPELCG.

This sequence belongs to the TUB family. Ubiquitous.

This chain is Tubby-like F-box protein 13 (TULP13), found in Oryza sativa subsp. japonica (Rice).